Reading from the N-terminus, the 272-residue chain is Sulfate transporter CysZ (272 aa).

A run of 4 helical transmembrane segments spans residues 29 to 49 (FVIM…WLFI), 66 to 86 (WLSF…LLLF), 148 to 168 (IIAL…VPVL), and 219 to 239 (FVPV…TLMW).

Belongs to the CysZ family.

It localises to the cell inner membrane. Its function is as follows. High affinity, high specificity proton-dependent sulfate transporter, which mediates sulfate uptake. Provides the sulfur source for the cysteine synthesis pathway. This Haemophilus influenzae (strain ATCC 51907 / DSM 11121 / KW20 / Rd) protein is Sulfate transporter CysZ.